A 1174-amino-acid chain; its full sequence is Protein kinase C-like (1174 aa).

In terms of domain architecture, REM-1 1 spans 1 to 68; sequence MANVEETVAN…LRDLDLQRTT (68 aa). Polar residues predominate over residues 69–84; it reads SGVDNMSLQPGRSPTN. Positions 69-140 are disordered; the sequence is SGVDNMSLQP…PPPATANKRP (72 aa). Low complexity predominate over residues 96–123; the sequence is GYAQQDQGGYGGPQSQYSQLSGGEALQP. The span at 124–134 shows a compositional bias: pro residues; the sequence is PRAPFAAPPPA. The REM-1 2 domain occupies 149 to 226; that stretch reads KYDTPHLGPR…LKRYEDLHVD (78 aa). The 121-residue stretch at 229–349 folds into the C2 domain; the sequence is GDGDDNDSLD…MRRKKLETEL (121 aa). Residues 358 to 406 form a disordered region; it reads DKMGGHTGIQPDMQFQPPPGQSPAGGPGGGPTPAGVRPPGAPQPQTGPI. Positions 380–389 are enriched in gly residues; it reads PAGGPGGGPT. 2 consecutive Phorbol-ester/DAG-type zinc fingers follow at residues 458 to 506 and 526 to 576; these read GHKF…VTKC and PHRF…PDFC. Residues 593–842 form a disordered region; that stretch reads TRRGQSSSGP…PAANTQGTGK (250 aa). A compositionally biased stretch (polar residues) spans 596 to 611; the sequence is GQSSSGPGMSQRTLRP. The segment covering 624-636 has biased composition (low complexity); the sequence is QSPGQPGQESPTQ. Residues 648 to 657 are compositionally biased toward pro residues; the sequence is SPPPGPPRQP. Residues 658–709 are compositionally biased toward low complexity; the sequence is SYPSSATSVDAARASYSTTGTASTGAPTSPTSGSRPPSGPRTQSSVAAAAAA. Polar residues predominate over residues 720–744; the sequence is RSNTDYSPQSGRSSGSGYPTEQRMS. Positions 786-802 are enriched in pro residues; the sequence is LPQPPPPQSPPQHPQQP. Residues 808 to 820 show a composition bias toward polar residues; that stretch reads KMPEQQALTQQPP. One can recognise a Protein kinase domain in the interval 849–1108; sequence FNFLAVLGKG…AQEIMSHAFF (260 aa). ATP-binding positions include 855-863 and K878; that span reads LGKGNFGKV. D974 (proton acceptor) is an active-site residue. The AGC-kinase C-terminal domain maps to 1109-1174; the sequence is RNINWDDIYH…RGFSYSADFA (66 aa).

The protein belongs to the protein kinase superfamily. AGC Ser/Thr protein kinase family. PKC subfamily.

It carries out the reaction L-seryl-[protein] + ATP = O-phospho-L-seryl-[protein] + ADP + H(+). The catalysed reaction is L-threonyl-[protein] + ATP = O-phospho-L-threonyl-[protein] + ADP + H(+). This Cochliobolus heterostrophus (Southern corn leaf blight fungus) protein is Protein kinase C-like (PKC1).